Reading from the N-terminus, the 535-residue chain is E3 ubiquitin-protein ligase rnf168 (535 aa).

The RING-type zinc-finger motif lies at 16–55 (CPICQEILLEPVTLPCKHTLCNPCFQMTVEKASLCCPFCR). Positions 112–130 (LCKPGEIRQEYEAEVSKIE) match the LR motif 1 motif. The UMI motif signature appears at 145 to 153 (EDYIQKLLA). 2 short sequence motifs (MIU motif) span residues 170–193 (IEEQ…LSNA) and 406–429 (RRKQ…KELK). The span at 429–443 (KQVNRGKGSPDEYQL) shows a compositional bias: basic and acidic residues. Residues 429-535 (KQVNRGKGSP…LDLFQRSAGK (107 aa)) are disordered. Positions 433-444 (RGKGSPDEYQLR) match the LR motif 2 motif. Polar residues-rich tracts occupy residues 462-478 (NEQT…QSGY) and 492-507 (ITSS…TNTE).

This sequence belongs to the RNF168 family. In terms of assembly, monomer.

It localises to the nucleus. The enzyme catalyses S-ubiquitinyl-[E2 ubiquitin-conjugating enzyme]-L-cysteine + [acceptor protein]-L-lysine = [E2 ubiquitin-conjugating enzyme]-L-cysteine + N(6)-ubiquitinyl-[acceptor protein]-L-lysine.. The protein operates within protein modification; protein ubiquitination. Its function is as follows. E3 ubiquitin-protein ligase required for accumulation of repair proteins to sites of DNA damage. Acts with ube2n/ubc13 to amplify the rnf8-dependent histone ubiquitination. Recruited to sites of DNA damage at double-strand breaks (DSBs) by binding to ubiquitinated histone H2A and ubiquitinates histone H2A and H2AX, leading to amplify the rnf8-dependent H2A ubiquitination and promoting the formation of 'Lys-63'-linked ubiquitin conjugates. This leads to concentrate ubiquitinated histones H2A and H2AX at DNA lesions to the threshold required for recruitment of tp53bp1 and brca1. Catalyzes monoubiquitination of 'Lys-13' and 'Lys-15' of nucleosomal histone H2A (H2AK13Ub and H2AK15Ub, respectively). This chain is E3 ubiquitin-protein ligase rnf168, found in Xenopus tropicalis (Western clawed frog).